A 288-amino-acid chain; its full sequence is Elongation factor Ts (288 aa).

Residues 82 to 85 (TDFV) are involved in Mg(2+) ion dislocation from EF-Tu.

This sequence belongs to the EF-Ts family.

The protein localises to the cytoplasm. Associates with the EF-Tu.GDP complex and induces the exchange of GDP to GTP. It remains bound to the aminoacyl-tRNA.EF-Tu.GTP complex up to the GTP hydrolysis stage on the ribosome. The polypeptide is Elongation factor Ts (Chlorobium luteolum (strain DSM 273 / BCRC 81028 / 2530) (Pelodictyon luteolum)).